Consider the following 427-residue polypeptide: Trigger factor (427 aa).

The 86-residue stretch at 163–248 (GDTVVIDFVG…IHEVKAKEVP (86 aa)) folds into the PPIase FKBP-type domain.

It belongs to the FKBP-type PPIase family. Tig subfamily.

It is found in the cytoplasm. It catalyses the reaction [protein]-peptidylproline (omega=180) = [protein]-peptidylproline (omega=0). Functionally, involved in protein export. Acts as a chaperone by maintaining the newly synthesized protein in an open conformation. Functions as a peptidyl-prolyl cis-trans isomerase. This chain is Trigger factor, found in Streptococcus pneumoniae serotype 2 (strain D39 / NCTC 7466).